The chain runs to 680 residues: DNA-directed RNA polymerase subunit beta' (680 aa).

Positions 69, 71, 87, and 90 each coordinate Zn(2+). Mg(2+) is bound by residues aspartate 489, aspartate 491, and aspartate 493.

This sequence belongs to the RNA polymerase beta' chain family. RpoC1 subfamily. In plastids the minimal PEP RNA polymerase catalytic core is composed of four subunits: alpha, beta, beta', and beta''. When a (nuclear-encoded) sigma factor is associated with the core the holoenzyme is formed, which can initiate transcription. Mg(2+) is required as a cofactor. Zn(2+) serves as cofactor.

The protein resides in the plastid. It localises to the chloroplast. The catalysed reaction is RNA(n) + a ribonucleoside 5'-triphosphate = RNA(n+1) + diphosphate. Its function is as follows. DNA-dependent RNA polymerase catalyzes the transcription of DNA into RNA using the four ribonucleoside triphosphates as substrates. In Nandina domestica (Heavenly bamboo), this protein is DNA-directed RNA polymerase subunit beta'.